The following is a 426-amino-acid chain: Serine--tRNA ligase (426 aa).

233-235 (TAE) contacts L-serine. 264-266 (RSE) lines the ATP pocket. Glu287 lines the L-serine pocket. 351 to 354 (EISS) is a binding site for ATP. Ser387 provides a ligand contact to L-serine.

The protein belongs to the class-II aminoacyl-tRNA synthetase family. Type-1 seryl-tRNA synthetase subfamily. Homodimer. The tRNA molecule binds across the dimer.

The protein localises to the cytoplasm. The enzyme catalyses tRNA(Ser) + L-serine + ATP = L-seryl-tRNA(Ser) + AMP + diphosphate + H(+). It carries out the reaction tRNA(Sec) + L-serine + ATP = L-seryl-tRNA(Sec) + AMP + diphosphate + H(+). The protein operates within aminoacyl-tRNA biosynthesis; selenocysteinyl-tRNA(Sec) biosynthesis; L-seryl-tRNA(Sec) from L-serine and tRNA(Sec): step 1/1. Catalyzes the attachment of serine to tRNA(Ser). Is also able to aminoacylate tRNA(Sec) with serine, to form the misacylated tRNA L-seryl-tRNA(Sec), which will be further converted into selenocysteinyl-tRNA(Sec). The chain is Serine--tRNA ligase from Clostridium botulinum (strain Loch Maree / Type A3).